Reading from the N-terminus, the 478-residue chain is POU domain, class 2, transcription factor 2 (478 aa).

Disordered regions lie at residues 1-82 (MVHS…PPQA), 167-199 (QAVT…EASD), 275-298 (SSLP…GRRR), 357-391 (PCSA…PLSQ), and 409-478 (TLHP…PYQP). Residues 12–37 (RMSKPLEAEKQGLDSPSEHTDTERNG) are compositionally biased toward basic and acidic residues. Polar residues predominate over residues 38-60 (PDTNHQNPQNKTSPFSVSPTGPS). The POU-specific domain occupies 195-269 (EEASDLEELE…LLEKWLNDAE (75 aa)). Residues 275–285 (SSLPSPNQLSR) are compositionally biased toward polar residues. The homeobox DNA-binding region spans 297 to 356 (RRKKRTSIETNVRFALEKSFLANQKPTSEEILLIAEQLHMEKEVIRVWFCNRRQKEKRIN). The tract at residues 389-410 (LSQASSSLSTTVTTLSSAVGTL) is leucine-zipper. A compositionally biased stretch (gly residues) spans 416-425 (AGGGAAGGGA).

This sequence belongs to the POU transcription factor family. Class-2 subfamily. In terms of assembly, interacts with NR3C1, AR and PGR. Interacts with POU2AF1; the interaction increases POU2F2 transactivation activity. As to expression, predominantly expressed in B-cells.

The protein resides in the nucleus. Transactivation activity is enhanced by transcriptional coactivator POU2AF1. Functionally, transcription factor that specifically binds to the octamer motif (5'-ATTTGCAT-3'). Regulates IL6 expression in B cells with POU2AF1. Regulates transcription in a number of tissues in addition to activating immunoglobulin gene expression. Modulates transcription transactivation by NR3C1, AR and PGR. The protein is POU domain, class 2, transcription factor 2 (POU2F2) of Sus scrofa (Pig).